A 304-amino-acid polypeptide reads, in one-letter code: HTH-type transcriptional regulator TtuA (304 aa).

Residues 1–58 enclose the HTH lysR-type domain; sequence MELEQLKCFVAAAEELHFGRAAQKMGILPASLGRHLRLLEESLGTRLMSRTTRSVALT. Residues 18–37 constitute a DNA-binding region (H-T-H motif); it reads FGRAAQKMGILPASLGRHLR.

The protein belongs to the LysR transcriptional regulatory family.

Transcriptional regulator of the ttuABCDE tartrate utilization operon. This is HTH-type transcriptional regulator TtuA (ttuA) from Agrobacterium vitis (Rhizobium vitis).